The following is a 147-amino-acid chain: Large ribosomal subunit protein uL13 (147 aa).

It belongs to the universal ribosomal protein uL13 family. Part of the 50S ribosomal subunit.

This protein is one of the early assembly proteins of the 50S ribosomal subunit, although it is not seen to bind rRNA by itself. It is important during the early stages of 50S assembly. This Lactiplantibacillus plantarum (strain ATCC BAA-793 / NCIMB 8826 / WCFS1) (Lactobacillus plantarum) protein is Large ribosomal subunit protein uL13.